Here is a 362-residue protein sequence, read N- to C-terminus: Cobalt-precorrin-5B C(1)-methyltransferase (362 aa).

Belongs to the CbiD family.

The catalysed reaction is Co-precorrin-5B + S-adenosyl-L-methionine = Co-precorrin-6A + S-adenosyl-L-homocysteine. Its pathway is cofactor biosynthesis; adenosylcobalamin biosynthesis; cob(II)yrinate a,c-diamide from sirohydrochlorin (anaerobic route): step 6/10. In terms of biological role, catalyzes the methylation of C-1 in cobalt-precorrin-5B to form cobalt-precorrin-6A. This Synechococcus sp. (strain CC9902) protein is Cobalt-precorrin-5B C(1)-methyltransferase.